The chain runs to 625 residues: Probable potassium transport system protein Kup 2 (625 aa).

12 helical membrane-spanning segments follow: residues 15–35 (LSFAALGVVFGDIGTSPLYAF), 52–72 (ILSLIFWSLIIIVSIKYLVIV), 98–118 (GGWLLFITLVGIGLIIGDGML), 134–154 (LSPNLAKYVLPVTLIILFFLF), 164–184 (IGVYFAPVMLVWFITIGILGF), 212–232 (LALFILGGVFLVMTGGEALFA), 246–266 (WFAVALPALLLCYFGQGALVL), 284–304 (FLPVMIILATLATIIASQAII), 336–356 (VYLPLINFILALGTCSLVVIF), 365–385 (AYGIAVNLDMLITTVLVGIIA), 394–414 (FKILIFLLILIIELAFFAGNI), and 417–437 (LLTGGWIPILIAFLGFVVMYT).

Belongs to the HAK/KUP transporter (TC 2.A.72) family.

Its subcellular location is the cell inner membrane. It carries out the reaction K(+)(in) + H(+)(in) = K(+)(out) + H(+)(out). Transport of potassium into the cell. Likely operates as a K(+):H(+) symporter. This chain is Probable potassium transport system protein Kup 2, found in Legionella pneumophila (strain Corby).